A 239-amino-acid polypeptide reads, in one-letter code: MINVLIIDDDAMVAELNRRYVAQIPGFQCCGTASTLEKAKEIIFNSDTPIDLILLDIYMQKENGLDLLPVLHNARCKSDVIVISSAADAVTIKDSLHYGVVDYLIKPFQASRFEEALTGWRQKKMALEKHQYYDQAELDQLIHGSSSNEQDPRRLPKGLTPQTLRTLCQWIDAHQDYEFSTDELANEVNISRVSCRKYLIWLVNCHILFTSIHYGVTGRPVYRYRIQAEHYSLLKQYCQ.

The Response regulatory domain maps to Asn3–Arg121. Asp56 is modified (4-aspartylphosphate). The H-T-H motif DNA-binding region spans Thr181–Ile200.

Post-translationally, phosphorylated and activated by DcuS.

Its subcellular location is the cytoplasm. Member of the two-component regulatory system DcuR/DcuS. Involved in the C4-dicarboxylate-stimulated regulation of the genes encoding the anaerobic fumarate respiratory system (frdABCD; nuoAN; dcuB; dcuC; sdhCDAB; etc.). Weakly regulates the aerobic C4-dicarboxylate transporter dctA. The sequence is that of Transcriptional regulatory protein DcuR (dcuR) from Escherichia coli O6:H1 (strain CFT073 / ATCC 700928 / UPEC).